The sequence spans 251 residues: Chromobox protein homolog 7 (251 aa).

Residues 11–69 (FAVESIRKKRVRKGKVEYLVKWKGWPPKYSTWEPEEHILDPRLVMAYEEKEERDRASGY) enclose the Chromo domain. A disordered region spans residues 190-220 (EPAAQPPEEEADADLAEGPPPWTPALPSSEV). The required for cellular lifespan extension stretch occupies residues 223–236 (TDITANSITVTFRE).

Component of a PRC1-like complex. Interacts with RING1 and RNF2/RING1B, but not with BMI1, EED or EZH2. Interacts with PCGF1, PCGF2, PCGF3, PCGF5 and PCGF6.

The protein localises to the nucleus. Functionally, component of a Polycomb group (PcG) multiprotein PRC1-like complex, a complex class required to maintain the transcriptionally repressive state of many genes, including Hox genes, throughout development. PcG PRC1 complex acts via chromatin remodeling and modification of histones; it mediates monoubiquitination of histone H2A 'Lys-119', rendering chromatin heritably changed in its expressibility. Promotes histone H3 trimethylation at 'Lys-9' (H3K9me3). Binds to trimethylated lysine residues in histones, and possibly also other proteins. Regulator of cellular lifespan by maintaining the repression of CDKN2A, but not by inducing telomerase activity. In Homo sapiens (Human), this protein is Chromobox protein homolog 7 (CBX7).